The sequence spans 122 residues: Large ribosomal subunit protein uL14 (122 aa).

This sequence belongs to the universal ribosomal protein uL14 family. In terms of assembly, part of the 50S ribosomal subunit. Forms a cluster with proteins L3 and L19. In the 70S ribosome, L14 and L19 interact and together make contacts with the 16S rRNA in bridges B5 and B8.

Functionally, binds to 23S rRNA. Forms part of two intersubunit bridges in the 70S ribosome. This Thermoanaerobacter pseudethanolicus (strain ATCC 33223 / 39E) (Clostridium thermohydrosulfuricum) protein is Large ribosomal subunit protein uL14.